Reading from the N-terminus, the 159-residue chain is Cytochrome c-type biogenesis protein CcmE (159 aa).

Over 1-7 (MTRKGRR) the chain is Cytoplasmic. Residues 8–28 (LVLIGAGLGVLALAAGLILSA) form a helical; Signal-anchor for type II membrane protein membrane-spanning segment. At 29-159 (LNDTIVFFRS…AAPVQRAPGS (131 aa)) the chain is on the periplasmic side. Residues His-121 and Tyr-125 each contribute to the heme site. The tract at residues 134–159 (LKKQGRWQEGGPAPGTAAPVQRAPGS) is disordered.

It belongs to the CcmE/CycJ family.

It localises to the cell inner membrane. Its function is as follows. Heme chaperone required for the biogenesis of c-type cytochromes. Transiently binds heme delivered by CcmC and transfers the heme to apo-cytochromes in a process facilitated by CcmF and CcmH. The polypeptide is Cytochrome c-type biogenesis protein CcmE (Xanthobacter autotrophicus (strain ATCC BAA-1158 / Py2)).